A 682-amino-acid polypeptide reads, in one-letter code: Serine/threonine-protein kinase PLK2 (682 aa).

Positions 25-67 (ACGGDSKKKRPQQPSEDGQSQAQVTPAAPHHHHHHSHSGPEIS) are disordered. Residues 36-48 (QQPSEDGQSQAQV) show a composition bias toward polar residues. The 253-residue stretch at 79-331 (YCRGKVLGKG…LDDIIRHDFF (253 aa)) folds into the Protein kinase domain. Residues 85–93 (LGKGGFAKC) and Lys108 contribute to the ATP site. Catalysis depends on Asp202, which acts as the Proton acceptor. Thr236 carries the post-translational modification Phosphothreonine. The tract at residues 402–430 (TSITQQPSKHRTDEELQPPPTTFAKSGTS) is disordered. POLO box domains are found at residues 500–578 (WVTK…YMEE) and 598–682 (YLLQ…QRCN).

This sequence belongs to the protein kinase superfamily. Ser/Thr protein kinase family. CDC5/Polo subfamily. Interacts with CIB1. Interacts with NSF; causing NSF dissociation from GRIA2. Catalytic activity is enhanced by phosphorylation of Thr-236.

Its subcellular location is the cytoplasm. It is found in the cytoskeleton. The protein resides in the microtubule organizing center. It localises to the centrosome. The protein localises to the centriole. Its subcellular location is the cell projection. It is found in the dendrite. The enzyme catalyses L-seryl-[protein] + ATP = O-phospho-L-seryl-[protein] + ADP + H(+). It carries out the reaction L-threonyl-[protein] + ATP = O-phospho-L-threonyl-[protein] + ADP + H(+). Activated by phosphorylation of Thr-236. Once activated, activity is stimulated by binding target proteins. Its function is as follows. Tumor suppressor serine/threonine-protein kinase involved in synaptic plasticity, centriole duplication and G1/S phase transition. Polo-like kinases act by binding and phosphorylating proteins that are already phosphorylated on a specific motif recognized by the POLO box domains. Phosphorylates CPAP, NPM1, RAPGEF2, RASGRF1, SNCA, SIPA1L1 and SYNGAP1. Plays a key role in synaptic plasticity and memory by regulating the Ras and Rap protein signaling: required for overactivity-dependent spine remodeling by phosphorylating the Ras activator RASGRF1 and the Rap inhibitor SIPA1L1 leading to their degradation by the proteasome. Conversely, phosphorylates the Rap activator RAPGEF2 and the Ras inhibitor SYNGAP1, promoting their activity. Also regulates synaptic plasticity independently of kinase activity, via its interaction with NSF that disrupts the interaction between NSF and the GRIA2 subunit of AMPARs, leading to a rapid rundown of AMPAR-mediated current that occludes long term depression. Required for procentriole formation and centriole duplication by phosphorylating CPAP and NPM1, respectively. Its induction by p53/TP53 suggests that it may participate in the mitotic checkpoint following stress. The sequence is that of Serine/threonine-protein kinase PLK2 (Plk2) from Rattus norvegicus (Rat).